A 226-amino-acid chain; its full sequence is PKHD-type hydroxylase Bpet2704 (226 aa).

In terms of domain architecture, Fe2OG dioxygenase spans 78–178 (KIFPPLFNRY…RISAFFWMQS (101 aa)). The Fe cation site is built by H96, D98, and H159. Residue R169 coordinates 2-oxoglutarate.

Fe(2+) serves as cofactor. It depends on L-ascorbate as a cofactor.

This Bordetella petrii (strain ATCC BAA-461 / DSM 12804 / CCUG 43448) protein is PKHD-type hydroxylase Bpet2704.